A 560-amino-acid polypeptide reads, in one-letter code: Muellerian-inhibiting factor (560 aa).

An N-terminal signal peptide occupies residues 1-24 (MRDLPLTSLALVLSALGALLGTEA). Residues 25–451 (LRAEEPAVGT…DPRGPGRAQR (427 aa)) constitute a propeptide that is removed on maturation. N-linked (GlcNAc...) asparagine glycosylation is present at asparagine 64. Residues 259–287 (PLPAHGQLDTVPFPPPRPSAELEESPPSA) are disordered. Asparagine 329 carries N-linked (GlcNAc...) asparagine glycosylation. 3 disulfide bridges follow: cysteine 462–cysteine 526, cysteine 488–cysteine 557, and cysteine 492–cysteine 559.

This sequence belongs to the TGF-beta family. In terms of assembly, homodimer; disulfide-linked. Post-translationally, preproprotein is proteolytically processed to generate N- and C-terminal cleavage products that homodimerize and associate to form a biologically active non-covalent complex. Binding of the non-covalent complex to AMHR2 induces dissociation of the pro-region from the mature C-terminal dimer. The N-terminal portion of the protein, despite having no intrinsic activity, has the role of amplifying the activity of the C-terminus. As to expression, in ovaries, AMH is detected in granulosa cells of early growing follicles.

The protein localises to the secreted. Functionally, plays an important role in several reproductive functions. Induces Muellerian duct regression during male fetal sexual differentiation. Also plays a role in Leydig cell differentiation and function. In female acts as a negative regulator of the primordial to primary follicle transition and decreases FSH sensitivity of growing follicles. AMH signals by binding to a specific type-II receptor, AMHR2, that heterodimerizes with type-I receptors (ACVR1 and BMPR1A), and recruiting SMAD proteins that are translocated to the nucleus to regulate target gene expression. This is Muellerian-inhibiting factor from Homo sapiens (Human).